A 205-amino-acid chain; its full sequence is Small ribosomal subunit protein uS4 (205 aa).

An S4 RNA-binding domain is found at 95–163; the sequence is RRLDNVVYRL…FKENLESRDP (69 aa).

This sequence belongs to the universal ribosomal protein uS4 family. In terms of assembly, part of the 30S ribosomal subunit. Contacts protein S5. The interaction surface between S4 and S5 is involved in control of translational fidelity.

Its function is as follows. One of the primary rRNA binding proteins, it binds directly to 16S rRNA where it nucleates assembly of the body of the 30S subunit. Functionally, with S5 and S12 plays an important role in translational accuracy. This chain is Small ribosomal subunit protein uS4, found in Persephonella marina (strain DSM 14350 / EX-H1).